Reading from the N-terminus, the 204-residue chain is MKYTFLAVLSAVTVLATPAPVPTPPNIPSASTAQSLLSGLTVRPQGPQDGYSRDKFPHWITISGTCNTRETVLRRDGTNVQVDGSCAATSGSWFSPYDGATWTAASDVDIDHVVPLSNAWKSGAASWTTSQRQSFANDLSNPQLIAVTDNVNQAKGDQGPESWKPPLQSYWCTYSRMWIKVKSVYDLSVTSAEKSALTSMLNTC.

The signal sequence occupies residues 1-16; the sequence is MKYTFLAVLSAVTVLA.

It is found in the secreted. This is an uncharacterized protein from Arthroderma benhamiae (strain ATCC MYA-4681 / CBS 112371) (Trichophyton mentagrophytes).